Consider the following 189-residue polypeptide: 3-isopropylmalate dehydratase small subunit (189 aa).

It belongs to the LeuD family. LeuD type 1 subfamily. As to quaternary structure, heterodimer of LeuC and LeuD.

It carries out the reaction (2R,3S)-3-isopropylmalate = (2S)-2-isopropylmalate. Its pathway is amino-acid biosynthesis; L-leucine biosynthesis; L-leucine from 3-methyl-2-oxobutanoate: step 2/4. Its function is as follows. Catalyzes the isomerization between 2-isopropylmalate and 3-isopropylmalate, via the formation of 2-isopropylmaleate. This chain is 3-isopropylmalate dehydratase small subunit, found in Francisella tularensis subsp. holarctica (strain FTNF002-00 / FTA).